The primary structure comprises 145 residues: Deoxyuridine 5'-triphosphate nucleotidohydrolase (145 aa).

Substrate-binding positions include 63–65, Gln76, and 80–82; these read RSG and TVD.

Belongs to the dUTPase family. The cofactor is Mg(2+).

It catalyses the reaction dUTP + H2O = dUMP + diphosphate + H(+). It participates in pyrimidine metabolism; dUMP biosynthesis; dUMP from dCTP (dUTP route): step 2/2. Functionally, this enzyme is involved in nucleotide metabolism: it produces dUMP, the immediate precursor of thymidine nucleotides and it decreases the intracellular concentration of dUTP so that uracil cannot be incorporated into DNA. The polypeptide is Deoxyuridine 5'-triphosphate nucleotidohydrolase (Chlamydia muridarum (strain MoPn / Nigg)).